The following is an 849-amino-acid chain: Putative pentatricopeptide repeat-containing protein At5g08490 (849 aa).

20 PPR repeats span residues 20-54 (DHRV…GHIA), 55-89 (CSEV…DPVV), 121-155 (SSVT…GLEK), 156-187 (DTLV…IADK), 188-222 (DVVS…PTEP), 223-260 (NYAT…SWLQ), 262-296 (HVFV…DLVS), 297-327 (WNVV…GDVS), 329-363 (DSVT…SYLL), 365-399 (DTSV…DIIS), 400-430 (WNAI…AITL), 431-465 (DSVT…GLLH), 469-499 (EPKL…LSER), 501-531 (TLVS…MSTT), 532-566 (DLTT…GMRP), 567-597 (NTVT…IIRG), 601-631 (DIRL…DARR), 632-666 (DLVM…NIKP), 667-702 (DHVF…GMKP), and 703-733 (TMEQ…MPVE). The interval 738 to 813 (IWGTLLRACT…PAGCSWLEVD (76 aa)) is type E motif. The interval 814–844 (GQRNVFVSGDCSHPRRDSIFDLVNALYLQMK) is type E(+) motif.

This sequence belongs to the PPR family. PCMP-E subfamily.

The sequence is that of Putative pentatricopeptide repeat-containing protein At5g08490 (PCMP-E32) from Arabidopsis thaliana (Mouse-ear cress).